The sequence spans 190 residues: Peptidyl-tRNA hydrolase (190 aa).

Y18 contributes to the tRNA binding site. The active-site Proton acceptor is the H23. TRNA is bound by residues F69, N71, and N117.

This sequence belongs to the PTH family. In terms of assembly, monomer.

Its subcellular location is the cytoplasm. It catalyses the reaction an N-acyl-L-alpha-aminoacyl-tRNA + H2O = an N-acyl-L-amino acid + a tRNA + H(+). In terms of biological role, hydrolyzes ribosome-free peptidyl-tRNAs (with 1 or more amino acids incorporated), which drop off the ribosome during protein synthesis, or as a result of ribosome stalling. Its function is as follows. Catalyzes the release of premature peptidyl moieties from peptidyl-tRNA molecules trapped in stalled 50S ribosomal subunits, and thus maintains levels of free tRNAs and 50S ribosomes. The chain is Peptidyl-tRNA hydrolase from Rhodococcus opacus (strain B4).